Reading from the N-terminus, the 745-residue chain is uncharacterized protein (745 aa).

Residues 158–256 (NQVCDYIELH…HQTPKQYRGD (99 aa)) enclose the HTH araC/xylS-type domain. 2 DNA-binding regions (H-T-H motif) span residues 175–196 (SELS…AESL) and 223–246 (ITDI…KHIT).

This is an uncharacterized protein from Staphylococcus aureus.